The sequence spans 420 residues: Glucose-1-phosphate adenylyltransferase (420 aa).

Residues Y107, G172, 187–188, and S205 contribute to the alpha-D-glucose 1-phosphate site; that span reads EK.

It belongs to the bacterial/plant glucose-1-phosphate adenylyltransferase family. Homotetramer.

It catalyses the reaction alpha-D-glucose 1-phosphate + ATP + H(+) = ADP-alpha-D-glucose + diphosphate. It functions in the pathway glycan biosynthesis; glycogen biosynthesis. In terms of biological role, involved in the biosynthesis of ADP-glucose, a building block required for the elongation reactions to produce glycogen. Catalyzes the reaction between ATP and alpha-D-glucose 1-phosphate (G1P) to produce pyrophosphate and ADP-Glc. This is Glucose-1-phosphate adenylyltransferase from Sinorhizobium fredii (strain NBRC 101917 / NGR234).